The sequence spans 503 residues: Na(+)-translocating NADH-quinone reductase subunit B (503 aa).

Helical transmembrane passes span 55–75, 120–142, and 160–180; these read MMLV…NSGL, IFLP…FAII, and LILP…FGVV. An FMN phosphoryl threonine modification is found at T248. 5 consecutive transmembrane segments (helical) span residues 361–381, 384–404, 417–437, 452–472, and 475–495; these read TSTV…IASW, MLSF…MSIL, FFIP…LVFM, WLYG…NPAY, and GVML…NIAL.

This sequence belongs to the NqrB/RnfD family. In terms of assembly, composed of six subunits; NqrA, NqrB, NqrC, NqrD, NqrE and NqrF. Requires FMN as cofactor.

The protein localises to the cell inner membrane. The catalysed reaction is a ubiquinone + n Na(+)(in) + NADH + H(+) = a ubiquinol + n Na(+)(out) + NAD(+). Its function is as follows. NQR complex catalyzes the reduction of ubiquinone-1 to ubiquinol by two successive reactions, coupled with the transport of Na(+) ions from the cytoplasm to the periplasm. NqrA to NqrE are probably involved in the second step, the conversion of ubisemiquinone to ubiquinol. The polypeptide is Na(+)-translocating NADH-quinone reductase subunit B (Chlamydia trachomatis serovar A (strain ATCC VR-571B / DSM 19440 / HAR-13)).